The following is a 109-amino-acid chain: Nucleoid-associated protein HD_0326 (109 aa).

It belongs to the YbaB/EbfC family. As to quaternary structure, homodimer.

The protein localises to the cytoplasm. It is found in the nucleoid. Its function is as follows. Binds to DNA and alters its conformation. May be involved in regulation of gene expression, nucleoid organization and DNA protection. The sequence is that of Nucleoid-associated protein HD_0326 from Haemophilus ducreyi (strain 35000HP / ATCC 700724).